The primary structure comprises 436 residues: 3-ketoacyl-CoA thiolase (436 aa).

Residue Cys99 is the Acyl-thioester intermediate of the active site. Catalysis depends on proton acceptor residues His392 and Cys422.

The protein belongs to the thiolase-like superfamily. Thiolase family. In terms of assembly, heterotetramer of two alpha chains (FadJ) and two beta chains (FadI).

The protein localises to the cytoplasm. The catalysed reaction is an acyl-CoA + acetyl-CoA = a 3-oxoacyl-CoA + CoA. It participates in lipid metabolism; fatty acid beta-oxidation. Functionally, catalyzes the final step of fatty acid oxidation in which acetyl-CoA is released and the CoA ester of a fatty acid two carbons shorter is formed. This Shigella boydii serotype 4 (strain Sb227) protein is 3-ketoacyl-CoA thiolase.